We begin with the raw amino-acid sequence, 132 residues long: Large ribosomal subunit protein bL17 (132 aa).

The protein belongs to the bacterial ribosomal protein bL17 family. Part of the 50S ribosomal subunit. Contacts protein L32.

This is Large ribosomal subunit protein bL17 from Cellvibrio japonicus (strain Ueda107) (Pseudomonas fluorescens subsp. cellulosa).